A 122-amino-acid chain; its full sequence is Large ribosomal subunit protein bL12 (122 aa).

This sequence belongs to the bacterial ribosomal protein bL12 family. Homodimer. Part of the ribosomal stalk of the 50S ribosomal subunit. Forms a multimeric L10(L12)X complex, where L10 forms an elongated spine to which 2 to 4 L12 dimers bind in a sequential fashion. Binds GTP-bound translation factors.

Forms part of the ribosomal stalk which helps the ribosome interact with GTP-bound translation factors. Is thus essential for accurate translation. The polypeptide is Large ribosomal subunit protein bL12 (Aliivibrio fischeri (strain ATCC 700601 / ES114) (Vibrio fischeri)).